Consider the following 308-residue polypeptide: Carbonic anhydrase 6 (308 aa).

The signal sequence occupies residues 1 to 17 (MRALVLLLSLFLLGGQA). An Alpha-carbonic anhydrase domain is found at 21–278 (SDWTYSEGAL…LNHRVVESNF (258 aa)). C42 and C224 are oxidised to a cystine. Residue N67 is glycosylated (N-linked (GlcNAc...) asparagine). H85 (proton donor/acceptor) is an active-site residue. Zn(2+) contacts are provided by H111, H113, and H138. 220 to 221 (TT) is a substrate binding site. Residue N256 is glycosylated (N-linked (GlcNAc...) asparagine).

It belongs to the alpha-carbonic anhydrase family. It depends on Zn(2+) as a cofactor. As to expression, major constituent of saliva.

It is found in the secreted. The catalysed reaction is hydrogencarbonate + H(+) = CO2 + H2O. Its activity is regulated as follows. Inhibited by coumarins, sulfonamide derivatives such as acetazolamide (AZA), saccharin and Foscarnet (phosphonoformate trisodium salt). Its function is as follows. Reversible hydration of carbon dioxide. Its role in saliva is unknown. In Homo sapiens (Human), this protein is Carbonic anhydrase 6 (CA6).